The sequence spans 368 residues: UPF0284 protein SYNPCC7002_A1742 (368 aa).

Belongs to the UPF0284 family.

In Picosynechococcus sp. (strain ATCC 27264 / PCC 7002 / PR-6) (Agmenellum quadruplicatum), this protein is UPF0284 protein SYNPCC7002_A1742.